The primary structure comprises 135 residues: uncharacterized protein (135 aa).

The chain crosses the membrane as a helical span at residues 4-24; that stretch reads LGVFLILASIVCGVVAICGCT.

Its subcellular location is the membrane. This is an uncharacterized protein from Methanocaldococcus jannaschii (strain ATCC 43067 / DSM 2661 / JAL-1 / JCM 10045 / NBRC 100440) (Methanococcus jannaschii).